The chain runs to 75 residues: Conotoxin Vt15.1 (75 aa).

A signal peptide spans 1–19; that stretch reads MMPVILPLLLSLAIRGGDG. Residues 20–43 constitute a propeptide that is removed on maturation; it reads QAIQGDRDLIAKLFKRYQEHGLSV. A Tryptophan amide modification is found at tryptophan 73.

The protein belongs to the conotoxin V superfamily. Contains 4 disulfide bonds. Expressed by the venom duct.

It is found in the secreted. The polypeptide is Conotoxin Vt15.1 (Conus planorbis (Planorbis cone)).